Consider the following 243-residue polypeptide: L-fucose operon activator (243 aa).

Residues 1–57 (MKAARQQAIVDLLLNHTSLTTEALSEQLKVSKETIRRDLNELQTQGKILRNHGRAKY) enclose the HTH deoR-type domain. Residues 19-38 (LTTEALSEQLKVSKETIRRD) constitute a DNA-binding region (H-T-H motif).

Functionally, transcriptional activator of the fuc operon. This Escherichia coli (strain K12) protein is L-fucose operon activator (fucR).